The chain runs to 355 residues: UDP-N-acetylglucosamine--N-acetylmuramyl-(pentapeptide) pyrophosphoryl-undecaprenol N-acetylglucosamine transferase (355 aa).

UDP-N-acetyl-alpha-D-glucosamine-binding positions include 11-13, Asn-123, Arg-162, Ser-185, Ile-239, 258-263, and Gln-284; these read TGG and ALTVSE.

The protein belongs to the glycosyltransferase 28 family. MurG subfamily.

It is found in the cell inner membrane. The enzyme catalyses di-trans,octa-cis-undecaprenyl diphospho-N-acetyl-alpha-D-muramoyl-L-alanyl-D-glutamyl-meso-2,6-diaminopimeloyl-D-alanyl-D-alanine + UDP-N-acetyl-alpha-D-glucosamine = di-trans,octa-cis-undecaprenyl diphospho-[N-acetyl-alpha-D-glucosaminyl-(1-&gt;4)]-N-acetyl-alpha-D-muramoyl-L-alanyl-D-glutamyl-meso-2,6-diaminopimeloyl-D-alanyl-D-alanine + UDP + H(+). The protein operates within cell wall biogenesis; peptidoglycan biosynthesis. Functionally, cell wall formation. Catalyzes the transfer of a GlcNAc subunit on undecaprenyl-pyrophosphoryl-MurNAc-pentapeptide (lipid intermediate I) to form undecaprenyl-pyrophosphoryl-MurNAc-(pentapeptide)GlcNAc (lipid intermediate II). This chain is UDP-N-acetylglucosamine--N-acetylmuramyl-(pentapeptide) pyrophosphoryl-undecaprenol N-acetylglucosamine transferase, found in Hydrogenovibrio crunogenus (strain DSM 25203 / XCL-2) (Thiomicrospira crunogena).